We begin with the raw amino-acid sequence, 1334 residues long: WASH complex subunit 2 (1334 aa).

A sufficient for interaction with WASHC3, WASHC4 and WASHC5; required for interaction with WASHC1 region spans residues 1-219; the sequence is MNRTSPDSER…VGSDRGSIVD (219 aa). Phosphoserine occurs at positions 157, 159, 204, 205, and 209. The span at 201–213 shows a compositional bias: low complexity; the sequence is GELSSEEGSVGSD. Residues 201-471 are disordered; the sequence is GELSSEEGSV…SKPSKTDKVK (271 aa). 2 stretches are compositionally biased toward acidic residues: residues 219–232 and 249–274; these read DSED…SDED and SDEE…EDIE. The residue at position 284 (Ser-284) is a Phosphoserine. Positions 289-324 are enriched in basic and acidic residues; sequence LAARIKGDISNQRKEGQTDGKPQKTVKEKKERRTPA. A Phosphothreonine modification is found at Thr-322. Residues 347 to 594 form a sufficient for interaction with CCDC93 region; it reads SRGGLFSNGQ…QTSSLQPQSQ (248 aa). An interaction with VPS35 region spans residues 348 to 1334; sequence RGGLFSNGQG…DDPLNAFGSQ (987 aa). Positions 358-368 match the LFa 1 motif; the sequence is LFDDEDESDLF. The residue at position 388 (Ser-388) is a Phosphoserine. Short sequence motifs (LFa) lie at residues 441 to 457 and 476 to 485; these read LFDD…NNFF and IFDDDEGDLF. The segment covering 442 to 454 has biased composition (acidic residues); the sequence is FDDDDNDNDEDDN. The tract at residues 492-650 is disordered; it reads LPAASVSQTH…DSGATQGQEA (159 aa). The span at 513–530 shows a compositional bias: polar residues; it reads LPSSKNLKLVSETKTQKG. Short sequence motifs (LFa) lie at residues 531–542 and 566–577; these read LFSDEEDSEDLF and LFGDEDEEDSLF. Ser-533 and Ser-538 each carry phosphoserine. A compositionally biased stretch (low complexity) spans 541-561; it reads LFSSQSSSKPKSASLPSSQPP. Composition is skewed to polar residues over residues 584–594 and 601–611; these read KQTSSLQPQSQ and EQPSKKTSALL. Ser-613 and Ser-614 each carry phosphoserine. The segment covering 625 to 639 has biased composition (basic and acidic residues); sequence SHTKLASDNKSKGEL. 2 short sequence motifs (LFa) span residues 658 to 670 and 686 to 698; these read LFED…VDLF and LFED…SSLF. A disordered region spans residues 691-837; it reads AESGSSLFGL…SRPKSTGVFQ (147 aa). Phosphoserine occurs at positions 723, 747, 752, 783, and 798. Residues 800–811 show a composition bias toward acidic residues; that stretch reads FDEDEDKVEDES. A compositionally biased stretch (basic and acidic residues) spans 818–830; sequence DGREKGLKTDSRP. 2 short sequence motifs (LFa) span residues 835-843 and 852-858; these read VFQDEELLF and DPDVDLF. Disordered regions lie at residues 862-948 and 1014-1225; these read KKIR…PSSR and AQAD…SKTH. Ser-870 and Ser-873 each carry phosphoserine. The short motif at 874–884 is the LFa 10 element; that stretch reads LFGDDEDDDLF. Residues 894–906 are compositionally biased toward basic and acidic residues; that stretch reads PEKKGTLKKDHPV. Over residues 908-919 the composition is skewed to polar residues; the sequence is LKNQDPLDSTQG. Residues 932 to 1334 form an interaction with phospholipids region; sequence QDSSGLTPFK…DDPLNAFGSQ (403 aa). The segment covering 1023–1041 has biased composition (basic residues); the sequence is NKSRVKVRGKRRPQTRAAR. The segment at 1024-1042 is required for interaction with F-actin-capping protein subunit alpha (CAPZA1 or CAPZA2 or CAPZA3); it reads KSRVKVRGKRRPQTRAARR. Phosphoserine occurs at positions 1049, 1067, 1084, and 1109. 3 short sequence motifs (LFa) span residues 1124-1131, 1164-1178, and 1194-1202; these read LFDSGDIF, AFPD…EDLF, and LLEDEEDLF. A phosphoserine mark is found at Ser-1169, Ser-1172, and Ser-1173. A compositionally biased stretch (basic and acidic residues) spans 1203 to 1225; that stretch reads ADPRGKKNERKPDSHQDSVSKTH. 3 short sequence motifs (LFa) span residues 1227–1233, 1255–1263, and 1283–1292; these read IFEDDIF, LFDDNIDIF, and MFDDDTDDIF. Residues 1294–1334 are disordered; it reads SGLQAKASKPKSQSAEAASEQRSEHKVASIFDDPLNAFGSQ. A compositionally biased stretch (low complexity) spans 1297-1311; the sequence is QAKASKPKSQSAEAA. The short motif at 1323-1331 is the LFa 17 element; that stretch reads IFDDPLNAF. Ser-1333 carries the phosphoserine modification.

Belongs to the FAM21 family. As to quaternary structure, component of the WASH core complex also described as WASH regulatory complex (SHRC) composed of WASHC1, WASHC2, WASHC3, WASHC4 and WASHC5; in the complex interacts (via N-terminus) directly with WASHC1. The WASH core complex associates with the F-actin-capping protein dimer (formed by CAPZA1, CAPZA2 or CAPZA3 and CAPZB) in a transient or substoichiometric manner which was initially described as WASH complex. Interacts with VPS35; mediates the association with the retromer CSC complex. Interacts with FKBP15. Interacts with CCDC93, CCDC22, VPS35L; indicative for an association of the WASH core complex with the CCC and retriever complexes. Directly interacts with TBC1D23.

The protein localises to the early endosome membrane. The protein resides in the cell membrane. Its function is as follows. Acts as a component of the WASH core complex that functions as a nucleation-promoting factor (NPF) at the surface of endosomes, where it recruits and activates the Arp2/3 complex to induce actin polymerization, playing a key role in the fission of tubules that serve as transport intermediates during endosome sorting. Mediates the recruitment of the WASH core complex to endosome membranes via binding to phospholipids and VPS35 of the retromer CSC. Mediates the recruitment of the F-actin-capping protein dimer to the WASH core complex probably promoting localized F-actin polymerization needed for vesicle scission. Via its C-terminus binds various phospholipids, most strongly phosphatidylinositol 4-phosphate (PtdIns-(4)P), phosphatidylinositol 5-phosphate (PtdIns-(5)P) and phosphatidylinositol 3,5-bisphosphate (PtdIns-(3,5)P2). Involved in the endosome-to-plasma membrane trafficking and recycling of SNX27-retromer-dependent cargo proteins, such as GLUT1. Required for the association of DNAJC13, ENTR1, ANKRD50 with retromer CSC subunit VPS35. Required for the endosomal recruitment of CCC and retriever complexes subunits COMMD1 and CCDC93 as well as the retrievere complex subunit VPS35L. This Mus musculus (Mouse) protein is WASH complex subunit 2.